The following is a 142-amino-acid chain: Sec-independent protein translocase protein TatB (142 aa).

The helical transmembrane segment at 2 to 22 (FANVGWGEMLVLVIAGLVILG) threads the bilayer. Residues 89 to 142 (DDSIFTGKFDQNGKSEKPEQKPEKPQSAPGPAAAVPDQPAGGRSGSTPYDTDAT) form a disordered region. Residues 99–112 (QNGKSEKPEQKPEK) show a composition bias toward basic and acidic residues. A compositionally biased stretch (polar residues) spans 133-142 (GSTPYDTDAT).

The protein belongs to the TatB family. In terms of assembly, the Tat system comprises two distinct complexes: a TatABC complex, containing multiple copies of TatA, TatB and TatC subunits, and a separate TatA complex, containing only TatA subunits. Substrates initially bind to the TatABC complex, which probably triggers association of the separate TatA complex to form the active translocon.

The protein localises to the cell membrane. Part of the twin-arginine translocation (Tat) system that transports large folded proteins containing a characteristic twin-arginine motif in their signal peptide across membranes. Together with TatC, TatB is part of a receptor directly interacting with Tat signal peptides. TatB may form an oligomeric binding site that transiently accommodates folded Tat precursor proteins before their translocation. The protein is Sec-independent protein translocase protein TatB of Mycolicibacterium vanbaalenii (strain DSM 7251 / JCM 13017 / BCRC 16820 / KCTC 9966 / NRRL B-24157 / PYR-1) (Mycobacterium vanbaalenii).